A 553-amino-acid polypeptide reads, in one-letter code: 5'-nucleotidase (553 aa).

An N-terminal signal peptide occupies residues 1 to 21 (MKQRLIVKTALSAAILATLAG). The N-palmitoyl cysteine moiety is linked to residue Cys22. The S-diacylglycerol cysteine moiety is linked to residue Cys22. The a divalent metal cation site is built by Asp45, His47, Asp88, Asn120, His221, His256, and Gln258. Residues Phe432 and 501 to 507 (YNAAGGD) each bind substrate.

The protein belongs to the 5'-nucleotidase family. Chloride is required as a cofactor. Mg(2+) serves as cofactor.

It is found in the cell outer membrane. The catalysed reaction is a ribonucleoside 5'-phosphate + H2O = a ribonucleoside + phosphate. Functionally, degradation of extracellular 5'-nucleotides for nutritional needs. The polypeptide is 5'-nucleotidase (nutA) (Vibrio vulnificus (strain CMCP6)).